The sequence spans 81 residues: MANIKSQKKRVLTNEKSRLANKAFKSEIKTAIKKALNAKSNDEANKTELVNHAVSLVDKGLKKGIFKDNKAAREKSRLMSA.

Belongs to the bacterial ribosomal protein bS20 family.

Binds directly to 16S ribosomal RNA. The protein is Small ribosomal subunit protein bS20 of Mycoplasma capricolum subsp. capricolum (strain California kid / ATCC 27343 / NCTC 10154).